The sequence spans 131 residues: D-ribose pyranase (131 aa).

His-20 functions as the Proton donor in the catalytic mechanism. Substrate is bound by residues Asp-28, His-98, and 120–122; that span reads YAN.

This sequence belongs to the RbsD / FucU family. RbsD subfamily. As to quaternary structure, homodecamer.

The protein resides in the cytoplasm. It carries out the reaction beta-D-ribopyranose = beta-D-ribofuranose. It participates in carbohydrate metabolism; D-ribose degradation; D-ribose 5-phosphate from beta-D-ribopyranose: step 1/2. Catalyzes the interconversion of beta-pyran and beta-furan forms of D-ribose. The polypeptide is D-ribose pyranase (Clostridium perfringens (strain ATCC 13124 / DSM 756 / JCM 1290 / NCIMB 6125 / NCTC 8237 / Type A)).